Reading from the N-terminus, the 185-residue chain is GTP cyclohydrolase 1 (185 aa).

Zn(2+)-binding residues include Cys76, His79, and Cys147.

Belongs to the GTP cyclohydrolase I family. As to quaternary structure, toroid-shaped homodecamer, composed of two pentamers of five dimers.

It catalyses the reaction GTP + H2O = 7,8-dihydroneopterin 3'-triphosphate + formate + H(+). The protein operates within cofactor biosynthesis; 7,8-dihydroneopterin triphosphate biosynthesis; 7,8-dihydroneopterin triphosphate from GTP: step 1/1. In Clostridium perfringens (strain 13 / Type A), this protein is GTP cyclohydrolase 1.